Consider the following 52-residue polypeptide: UPF0057 membrane protein PA0567 (52 aa).

The next 2 membrane-spanning stretches (helical) occupy residues 6 to 26 (ILIA…FGGA) and 29 to 49 (LNIL…VYII).

It belongs to the UPF0057 (PMP3) family.

The protein resides in the cell membrane. The polypeptide is UPF0057 membrane protein PA0567 (Pseudomonas aeruginosa (strain ATCC 15692 / DSM 22644 / CIP 104116 / JCM 14847 / LMG 12228 / 1C / PRS 101 / PAO1)).